Here is a 180-residue protein sequence, read N- to C-terminus: Ribulose bisphosphate carboxylase small subunit, chloroplastic (180 aa).

A chloroplast-targeting transit peptide spans 1-57 (MVSSMMVSSAATFTRASPAQSSMVAPFTGLKSASAFPVTRKPNADLSHLPSNGGRVQ).

Belongs to the RuBisCO small chain family. As to quaternary structure, heterohexadecamer of 8 large and 8 small subunits.

It is found in the plastid. The protein resides in the chloroplast. Its function is as follows. RuBisCO catalyzes two reactions: the carboxylation of D-ribulose 1,5-bisphosphate, the primary event in carbon dioxide fixation, as well as the oxidative fragmentation of the pentose substrate. Both reactions occur simultaneously and in competition at the same active site. Although the small subunit is not catalytic it is essential for maximal activity. The sequence is that of Ribulose bisphosphate carboxylase small subunit, chloroplastic from Musa acuminata (Banana).